The following is a 714-amino-acid chain: Methyl-accepting chemotaxis protein TlpQ (714 aa).

The chain crosses the membrane as a helical span at residues 12-32 (ITLLAGLCLLGVVALLVGLSV). The 241-residue stretch at 50-290 (LDESARLRLE…LLGKNLAKAD (241 aa)) folds into the Cache domain. Histamine contacts are provided by residues E170, 208 to 210 (YFD), and D239. Residues 360-380 (TWVELGLGLGAAVLGLLVLWL) traverse the membrane as a helical segment. The region spanning 383–437 (RGVTRPILGVAHMLRDIASGEGDLTQRLPHTGRDELGELAGWFNRFLDKLQPIIR) is the HAMP domain. Positions 442–678 (SVRDARSTAD…EINRNVAAIR (237 aa)) constitute a Methyl-accepting transducer domain.

It belongs to the methyl-accepting chemotaxis (MCP) protein family. Homotetramer.

It localises to the cell membrane. Functionally, chemotactic-signal transducers respond to changes in the concentration of attractants and repellents in the environment, transduce a signal from the outside to the inside of the cell, and facilitate sensory adaptation through the variation of the level of methylation. TlpQ is a chemoreceptor that binds and mediates chemotaxis to histamine, a key biological signaling molecule. It binds histamine with high affinity, which permits responses to very low histamine concentrations. Chemotaxis to histamine may play a role in the virulence of P.aeruginosa by recruiting cells at the infection site and consequently modulating the expression of quorum-sensing-dependent virulence genes. TlpQ also binds and mediates chemotaxis to polyamines such as putrescine, spermidine, cadaverine, agmatine and ethylenediamine. In addition, binds the quorum-sensing signal autoinducer 2 (AI-2), thus inducing chemotaxis toward AI-2 and biofilm formation. The sequence is that of Methyl-accepting chemotaxis protein TlpQ from Pseudomonas aeruginosa (strain ATCC 15692 / DSM 22644 / CIP 104116 / JCM 14847 / LMG 12228 / 1C / PRS 101 / PAO1).